A 39-amino-acid chain; its full sequence is Photosystem II reaction center protein J (39 aa).

A helical membrane pass occupies residues 7 to 27; that stretch reads IPLWIVATVAGTGVLVVVGLF.

It belongs to the PsbJ family. As to quaternary structure, PSII is composed of 1 copy each of membrane proteins PsbA, PsbB, PsbC, PsbD, PsbE, PsbF, PsbH, PsbI, PsbJ, PsbK, PsbL, PsbM, PsbT, PsbX, PsbY, PsbZ, Psb30/Ycf12, peripheral proteins PsbO, CyanoQ (PsbQ), PsbU, PsbV and a large number of cofactors. It forms dimeric complexes.

Its subcellular location is the cellular thylakoid membrane. Functionally, one of the components of the core complex of photosystem II (PSII). PSII is a light-driven water:plastoquinone oxidoreductase that uses light energy to abstract electrons from H(2)O, generating O(2) and a proton gradient subsequently used for ATP formation. It consists of a core antenna complex that captures photons, and an electron transfer chain that converts photonic excitation into a charge separation. The sequence is that of Photosystem II reaction center protein J from Synechococcus elongatus (strain ATCC 33912 / PCC 7942 / FACHB-805) (Anacystis nidulans R2).